The sequence spans 559 residues: Thermosome subunit alpha (559 aa).

A compositionally biased stretch (basic and acidic residues) spans 535–547 (SEKKGGEGSKEES). The interval 535 to 559 (SEKKGGEGSKEESGGEGGSTPSLGD) is disordered.

The protein belongs to the TCP-1 chaperonin family. In terms of assembly, forms a Heterooligomeric complex of two stacked eight-membered rings.

Functionally, molecular chaperone; binds unfolded polypeptides in vitro, and has a weak ATPase activity. This Saccharolobus solfataricus (strain ATCC 35092 / DSM 1617 / JCM 11322 / P2) (Sulfolobus solfataricus) protein is Thermosome subunit alpha (thsA).